Consider the following 348-residue polypeptide: Guanosine ABC transporter permease protein NupP (348 aa).

9 helical membrane-spanning segments follow: residues 8 to 28, 61 to 81, 85 to 105, 107 to 127, 136 to 156, 189 to 209, 237 to 257, 277 to 297, and 320 to 340; these read LLVP…IMLV, YILS…NIGV, LLVG…PAYI, LPLA…IPGI, EVIV…YIIS, LHLG…IINK, IMTS…MEGL, IAVA…ACLL, and IVIA…FVMG.

It belongs to the binding-protein-dependent transport system permease family. As to quaternary structure, the complex is composed of two ATP-binding proteins (NupO), two transmembrane proteins (NupP and NupQ) and a solute-binding protein (NupN).

It is found in the cell membrane. Its function is as follows. Part of an ABC transporter complex involved in the uptake of guanosine. Responsible for the translocation of the substrate across the membrane. May be a nucleoside transporter of broad specificity but with various affinities for different substrates. This Bacillus subtilis (strain 168) protein is Guanosine ABC transporter permease protein NupP.